We begin with the raw amino-acid sequence, 45 residues long: Mu-conotoxin-like Cal 12.1.2d (45 aa).

4 disulfide bridges follow: C3-C16, C11-C28, C18-C33, and C27-C39. W17 carries the 6'-bromotryptophan modification. At P23 the chain carries 4-hydroxyproline. A 6'-bromotryptophan mark is found at W37 and W38. P40 carries the 4-hydroxyproline modification.

Expressed by the venom duct.

Its subcellular location is the secreted. Its function is as follows. Mu-conotoxins block voltage-gated sodium channels. This toxin reversibly blocks voltage-gated sodium channel in cephalopods, with no alteration in the voltage dependence of sodium conductance or on the kinetics of inactivation. This chain is Mu-conotoxin-like Cal 12.1.2d, found in Californiconus californicus (California cone).